The chain runs to 292 residues: Probable 2-(5''-triphosphoribosyl)-3'-dephosphocoenzyme-A synthase (292 aa).

This sequence belongs to the CitG/MdcB family.

It carries out the reaction 3'-dephospho-CoA + ATP = 2'-(5''-triphospho-alpha-D-ribosyl)-3'-dephospho-CoA + adenine. The sequence is that of Probable 2-(5''-triphosphoribosyl)-3'-dephosphocoenzyme-A synthase from Shigella sonnei (strain Ss046).